The chain runs to 219 residues: Large ribosomal subunit protein eL13 (219 aa).

A disordered region spans residues 198 to 219 (KDAAENPDDVTKAPTAVKRNKT).

Belongs to the eukaryotic ribosomal protein eL13 family. As to quaternary structure, component of the 60S large ribosomal subunit (LSU).

The protein resides in the cytoplasm. In terms of biological role, component of the ribosome, a large ribonucleoprotein complex responsible for the synthesis of proteins in the cell. The small ribosomal subunit (SSU) binds messenger RNAs (mRNAs) and translates the encoded message by selecting cognate aminoacyl-transfer RNA (tRNA) molecules. The large subunit (LSU) contains the ribosomal catalytic site termed the peptidyl transferase center (PTC), which catalyzes the formation of peptide bonds, thereby polymerizing the amino acids delivered by tRNAs into a polypeptide chain. The nascent polypeptides leave the ribosome through a tunnel in the LSU and interact with protein factors that function in enzymatic processing, targeting, and the membrane insertion of nascent chains at the exit of the ribosomal tunnel. As part of the LSU, it is probably required for its formation and the maturation of rRNAs. The chain is Large ribosomal subunit protein eL13 (RpL13) from Spodoptera frugiperda (Fall armyworm).